The primary structure comprises 342 residues: AM-toxin biosynthesis protein 12 (342 aa).

The signal sequence occupies residues 1-20 (MSLLITSLAWGALLDPEVSS).

The protein operates within mycotoxin biosynthesis. In terms of biological role, part of the gene clusters that mediate the biosynthesis of AM-toxins, host-selective toxins (HSTs) causing Alternaria blotch on apple, a worldwide distributed disease. AM-toxins are cyclic depsipeptides containing the 3 residues 2-hydroxy-isovaleric acid (2-HIV), dehydroalanine, L-alanine which are common for all 3 AM-toxins I to III. The fourth precursor is L-alpha-amino-methoxyphenyl-valeric acid (L-Amv) for AM-toxin I, L-alpha-amino-phenyl-valeric acid (L-Apv) for AM-toxin II, and L-alpha-amino-hydroxyphenyl-valeric acid (L-Ahv) for AM-toxin III. AM-toxins have two target sites for affecting susceptible apple cells; they cause invagination of the plasma membrane and electrolyte loss and chloroplast disorganization. The non-ribosomal peptide synthetase AMT1 contains 4 catalytic modules and is responsible for activation of each residue in AM-toxin. The aldo-keto reductase AMT2 catalyzes the conversion of 2-keto-isovaleric acid (2-KIV) to 2-hydroxy-isovaleric acid (2-HIV), one of the precursor residues incorporated by AMT1 during AM-toxin biosynthesis, by reduction of its ketone to an alcohol. The cytochrome P450 monooxygenase AMT3 and the thioesterase AMT4 are also important for AM-toxin production, but their exact function within the AM-toxin biosynthesis are not known yet. Up to 21 proteins (including AMT1 to AMT4) are predicted to be involved in AM-toxin biosynthesis since their expression ishighly up-regulated in AM-toxin-producing cultures. This is AM-toxin biosynthesis protein 12 from Alternaria alternata (Alternaria rot fungus).